Here is a 201-residue protein sequence, read N- to C-terminus: MEKFTTLEGVAAPMRIINIDTDRIIPKQYLKTIKRTGLGQGLFSEMRYNDDGSEYPDFVLNQPAYRHAKTLVVGDNFGCGSSREHAPWALADFGIRCVISTSFADIFFNNCAKNGILAIVVSPEDLEKLFQDAERGANATLTIDLAAQTIKGPDGGTLHFDIDEGRKHNLLNGLDEIGLTLDQKAPAIDAYEAKLAQREWA.

This sequence belongs to the LeuD family. LeuD type 1 subfamily. Heterodimer of LeuC and LeuD.

The enzyme catalyses (2R,3S)-3-isopropylmalate = (2S)-2-isopropylmalate. Its pathway is amino-acid biosynthesis; L-leucine biosynthesis; L-leucine from 3-methyl-2-oxobutanoate: step 2/4. Its function is as follows. Catalyzes the isomerization between 2-isopropylmalate and 3-isopropylmalate, via the formation of 2-isopropylmaleate. This Methylorubrum extorquens (strain ATCC 14718 / DSM 1338 / JCM 2805 / NCIMB 9133 / AM1) (Methylobacterium extorquens) protein is 3-isopropylmalate dehydratase small subunit.